A 1260-amino-acid chain; its full sequence is Neural cell adhesion molecule L1 (1260 aa).

A signal peptide spans 1–19 (MVVMLRYVWPLLLCSPCLL). Residues 20-1123 (IQIPDEYKGH…VSTTGSFASE (1104 aa)) lie on the Extracellular side of the membrane. Ig-like C2-type domains lie at 35 to 130 (PVIT…IQLV), 138 to 225 (PKET…EPID), 239 to 327 (PRLL…YYVT), 332 to 419 (PYWL…AYIY), 424 to 506 (PARI…NNVT), and 517 to 600 (TQIT…DEVE). 2 disulfide bridges follow: cysteine 57-cysteine 113 and cysteine 157-cysteine 208. 4 N-linked (GlcNAc...) asparagine glycosylation sites follow: asparagine 100, asparagine 202, asparagine 246, and asparagine 293. Cystine bridges form between cysteine 263–cysteine 311 and cysteine 353–cysteine 403. N-linked (GlcNAc...) asparagine glycosylation is found at asparagine 432, asparagine 478, asparagine 489, and asparagine 504. Cysteine 447 and cysteine 496 are joined by a disulfide. Cysteine 538 and cysteine 590 are joined by a disulfide. 2 short sequence motifs (cell attachment site) span residues 553–555 (RGD) and 562–564 (RGD). Residues asparagine 587 and asparagine 670 are each glycosylated (N-linked (GlcNAc...) asparagine). 5 consecutive Fibronectin type-III domains span residues 613–711 (PVPH…TPEA), 716–809 (NPVD…SGED), 811–916 (PQVS…PEGV), 919–1015 (HPEA…MALF), and 1014–1112 (LFGK…TGPV). Residues 697-724 (GEPSPVSESVVTPEAAPEKNPVDVRGEG) are disordered. Residues 712–724 (APEKNPVDVRGEG) show a composition bias toward basic and acidic residues. 11 N-linked (GlcNAc...) asparagine glycosylation sites follow: asparagine 725, asparagine 776, asparagine 824, asparagine 848, asparagine 875, asparagine 968, asparagine 978, asparagine 1022, asparagine 1030, asparagine 1073, and asparagine 1107. A helical transmembrane segment spans residues 1124 to 1146 (GWFIAFVSAIILLLLILLILCFI). The Cytoplasmic segment spans residues 1147 to 1260 (KRSKGGKYSV…SPINPAVALE (114 aa)). Phosphoserine occurs at positions 1166, 1181, 1184, 1197, 1246, 1247, and 1251. Disordered stretches follow at residues 1183–1210 (ESDN…SDDS) and 1229–1260 (IGQY…VALE). A compositionally biased stretch (polar residues) spans 1244-1253 (NDSSGATSPI).

It belongs to the immunoglobulin superfamily. L1/neurofascin/NgCAM family. In terms of assembly, interacts with SHTN1; the interaction occurs in axonal growth cones. Interacts with isoform 2 of BSG. As to expression, expressed in the brain, including in the molecular layer of the cerebellar cortex, the fiber-rich layers of the hippocampus (alveus, and strata lacunosum moleculare, radiatum, and oriens), the nerve fiber layer and the inner and outer plexiform layers of the retina, and in the molecular layer of the olfactory bulb (at protein level).

It localises to the cell membrane. It is found in the cell projection. Its subcellular location is the growth cone. Its function is as follows. Neural cell adhesion molecule involved in the dynamics of cell adhesion and in the generation of transmembrane signals at tyrosine kinase receptors. During brain development, critical in multiple processes, including neuronal migration, axonal growth and fasciculation, and synaptogenesis. In the mature brain, plays a role in the dynamics of neuronal structure and function, including synaptic plasticity. The chain is Neural cell adhesion molecule L1 (L1cam) from Mus musculus (Mouse).